The chain runs to 229 residues: NAD-dependent protein deacetylase (229 aa).

Residues 1–229 (MNKLNEALKK…SDAVKVFAEI (229 aa)) enclose the Deacetylase sirtuin-type domain. Ala20, Arg32, Gln96, Ile98, Asp99, His114, Thr181, Ser182, Asn205, and Val223 together coordinate NAD(+). 2 residues coordinate nicotinamide: Ile98 and Asp99. His114 serves as the catalytic Proton acceptor.

The protein belongs to the sirtuin family. Class U subfamily.

It is found in the cytoplasm. It carries out the reaction N(6)-acetyl-L-lysyl-[protein] + NAD(+) + H2O = 2''-O-acetyl-ADP-D-ribose + nicotinamide + L-lysyl-[protein]. Functionally, NAD-dependent protein deacetylase which modulates the activities of several enzymes which are inactive in their acetylated form. In Listeria monocytogenes serotype 4b (strain F2365), this protein is NAD-dependent protein deacetylase.